The primary structure comprises 617 residues: Alkaline/neutral invertase E, chloroplastic (617 aa).

The N-terminal 45 residues, Met1–Arg45, are a transit peptide targeting the chloroplast. Ser87 is subject to Phosphoserine.

It belongs to the glycosyl hydrolase 100 family. Expressed in roots, leaves and flowers.

It localises to the plastid. The protein localises to the chloroplast. The catalysed reaction is Hydrolysis of terminal non-reducing beta-D-fructofuranoside residues in beta-D-fructofuranosides.. Its function is as follows. Chloroplastic invertase that cleaves sucrose into glucose and fructose and is associated with the development of the photosynthetic apparatus and the assimilation of nitrogen in seedlings to control the sucrose to hexose ratio. Participates in the carbon flux between the cytosol and plastids in leaves. The protein is Alkaline/neutral invertase E, chloroplastic of Arabidopsis thaliana (Mouse-ear cress).